Reading from the N-terminus, the 479-residue chain is Long-chain acyl-protein thioester reductase (479 aa).

Belongs to the LuxC family.

It carries out the reaction a long-chain fatty aldehyde + NADP(+) + CoA = a long-chain fatty acyl-CoA + NADPH + H(+). The protein operates within lipid metabolism; fatty acid reduction for biolumincescence. In terms of biological role, luxC is the fatty acid reductase enzyme responsible for synthesis of the aldehyde substrate for the luminescent reaction catalyzed by luciferase. The polypeptide is Long-chain acyl-protein thioester reductase (luxC) (Aliivibrio fischeri (Vibrio fischeri)).